We begin with the raw amino-acid sequence, 163 residues long: Steroid receptor-associated and regulated protein (163 aa).

The span at 1–16 (MAFSKDPRRTSLRDSS) shows a compositional bias: basic and acidic residues. Disordered regions lie at residues 1–30 (MAFS…CAPK) and 96–149 (ALDG…EKVK). Residues 17 to 26 (VEMSSGTQPS) are compositionally biased toward polar residues.

As to quaternary structure, interacts with 14-3-3 proteins.

May regulate the transcriptional function of androgen and estrogen receptors. This is Steroid receptor-associated and regulated protein from Mus musculus (Mouse).